The sequence spans 251 residues: Flap endonuclease Xni (251 aa).

Residue Asp-104 coordinates Mg(2+). Residues 160–249 (VLPRQLPDYW…IDGNLQQLRL (90 aa)) form the 5'-3' exonuclease domain. K(+) is bound by residues Leu-171, Ala-172, Pro-180, Val-182, and Ile-185. Residues 184 to 189 (GIGPKS) form an interaction with DNA region.

This sequence belongs to the Xni family. Mg(2+) is required as a cofactor. K(+) serves as cofactor.

Has flap endonuclease activity. During DNA replication, flap endonucleases cleave the 5'-overhanging flap structure that is generated by displacement synthesis when DNA polymerase encounters the 5'-end of a downstream Okazaki fragment. The polypeptide is Flap endonuclease Xni (Salmonella heidelberg (strain SL476)).